Reading from the N-terminus, the 498-residue chain is Swainsonine transporter swnT (498 aa).

Basic and acidic residues predominate over residues 1-10 (MSLRNDEQTE). Positions 1–21 (MSLRNDEQTEKGAVVGKVDSQ) are disordered. The next 5 membrane-spanning stretches (helical) occupy residues 42–64 (LSAIGIGYGVTNTAVGLLLVLGT), 79–99 (LAMAAVGLATATTLSELISAI), 126–146 (AMISWIAAIAIGASGNLAVPV), 167–187 (FVVFQLINIVTCFGACFEYFL), and 193–213 (ALLLVNVLSVSAIIITLFATA). 2 N-linked (GlcNAc...) asparagine glycosylation sites follow: Asn227 and Asn242. Transmembrane regions (helical) follow at residues 272 to 292 (LIWTIVIAFSSGLLMILAVLV), 316 to 336 (AAAIGLWVPVLFLVFASVWSI), 370 to 390 (PIWSLIGSAIGTALFGCLYLA), 398 to 418 (LIATGILLQYASYSIPTILVL), 436 to 456 (GFMANIVMLAWTLVALIFYCF), and 469 to 489 (YVSAVLILIAILITSLWFLYA).

It belongs to the amino acid-polyamine-organocation (APC) superfamily. Amino acid/choline transporter (ACT) (TC 2.A.3.4) family.

Its subcellular location is the membrane. Its function is as follows. Transmembrane transporter; part of the gene cluster that mediates the biosynthesis of swainsonine, a cytotoxic fungal alkaloid and a potential cancer therapy drug. Does not mediate the secretion of SW and the exact role of swnT in SW biosynthesis remains to be determined. The sequence is that of Swainsonine transporter swnT from Arthroderma benhamiae (strain ATCC MYA-4681 / CBS 112371) (Trichophyton mentagrophytes).